The chain runs to 163 residues: UPF0262 protein RPC_4416 (163 aa).

It belongs to the UPF0262 family.

In Rhodopseudomonas palustris (strain BisB18), this protein is UPF0262 protein RPC_4416.